The primary structure comprises 181 residues: MESGFKVTLKDAIRTIPDYPKPGVQFRDVTTLMGNAQAFRRAVDELVYPYAGNRIDKVAGIEARGFILGGAIAHQLSAGFVPIRKKGKLPRDTVRIAYSLEYGVDEMEMHRDAIEKGERVVLVDDLIATGGTAEAAAKLLLQMGAEIVAACFIIDLPDLGGRKKLEALGLPVRTLVAFEGD.

It belongs to the purine/pyrimidine phosphoribosyltransferase family. In terms of assembly, homodimer.

It is found in the cytoplasm. It carries out the reaction AMP + diphosphate = 5-phospho-alpha-D-ribose 1-diphosphate + adenine. Its pathway is purine metabolism; AMP biosynthesis via salvage pathway; AMP from adenine: step 1/1. Functionally, catalyzes a salvage reaction resulting in the formation of AMP, that is energically less costly than de novo synthesis. This chain is Adenine phosphoribosyltransferase, found in Brucella abortus (strain S19).